Here is a 223-residue protein sequence, read N- to C-terminus: uncharacterized protein (223 aa).

The N-terminal 12 residues, 1 to 12, are a transit peptide targeting the mitochondrion; the sequence is MFRSLVRKTTPL.

The protein resides in the mitochondrion. This is an uncharacterized protein from Candida albicans (strain WO-1) (Yeast).